The chain runs to 588 residues: Arginine--tRNA ligase (588 aa).

A 'HIGH' region motif is present at residues 129–139; the sequence is PNIAKEMHVGH.

The protein belongs to the class-I aminoacyl-tRNA synthetase family. Monomer.

It is found in the cytoplasm. It carries out the reaction tRNA(Arg) + L-arginine + ATP = L-arginyl-tRNA(Arg) + AMP + diphosphate. This is Arginine--tRNA ligase from Frankia casuarinae (strain DSM 45818 / CECT 9043 / HFP020203 / CcI3).